The following is a 1651-amino-acid chain: Alsin (1651 aa).

3 RCC1 repeats span residues 59 to 108, 109 to 167, and 169 to 218; these read DGEV…AVTE, SGVV…ALSL, and REIW…ALVQ. Residues 425–462 form a disordered region; sequence ETAAQSGSASTGPESLKDLREEQVKQESLQGKKSSSLM. Over residues 427-437 the composition is skewed to polar residues; that stretch reads AAQSGSASTGP. The span at 439-449 shows a compositional bias: basic and acidic residues; the sequence is SLKDLREEQVK. Positions 450-461 are enriched in polar residues; it reads QESLQGKKSSSL. S459, S460, S477, and S486 each carry phosphoserine. T504 is subject to Phosphothreonine. 2 RCC1 repeats span residues 519–570 and 572–621; these read RTEV…ALTA and SQVY…FLVD. The residue at position 527 (K527) is an N6-acetyllysine. One can recognise a DH domain in the interval 684 to 879; sequence GYIASLHELA…ESLALHLGKK (196 aa). Residues 895 to 1001 form the PH domain; the sequence is GKMTDSLRKP…RAISQAVDQA (107 aa). MORN repeat units lie at residues 1043–1065, 1066–1088, 1094–1116, 1117–1139, 1145–1167, 1169–1191, 1192–1214, and 1215–1238; these read YDGR…DGKM, YSGM…NKAL, YVGH…SGEV, FEGC…KLTS, FIGQ…TRGE, YMGM…FGLY, YEGN…DDTI, and YEGE…HGDY. At S1329 the chain carries Phosphoserine. Residues 1507 to 1651 form the VPS9 domain; the sequence is KQPDIALLGF…YFQIQREKLN (145 aa).

As to quaternary structure, forms a heteromeric complex with ALS2CL. Interacts with ALS2CL.

In terms of biological role, may act as a GTPase regulator. Controls survival and growth of spinal motoneurons. The chain is Alsin (Als2) from Mus musculus (Mouse).